We begin with the raw amino-acid sequence, 398 residues long: Chalcone synthase 1 (398 aa).

58–65 (KFKRMCDK) lines the CoA pocket. Residue C167 is the Acyl-thioester intermediate of the active site. Residues T200 and 219 to 220 (GD) contribute to the substrate site. A311 is a CoA binding site.

It belongs to the thiolase-like superfamily. Chalcone/stilbene synthases family. In terms of assembly, homodimer.

The enzyme catalyses (E)-4-coumaroyl-CoA + 3 malonyl-CoA + 3 H(+) = 2',4,4',6'-tetrahydroxychalcone + 3 CO2 + 4 CoA. It participates in secondary metabolite biosynthesis; flavonoid biosynthesis. In terms of biological role, the primary product of this enzyme is 4,2',4',6'-tetrahydroxychalcone (also termed naringenin-chalcone or chalcone) which can under specific conditions spontaneously isomerize into naringenin. The chain is Chalcone synthase 1 (CHS1) from Oryza sativa subsp. indica (Rice).